We begin with the raw amino-acid sequence, 2381 residues long: Highly reducing polyketide synthase virA (2381 aa).

The Ketosynthase family 3 (KS3) domain maps to 1-420 (MDALHLACHL…GANGHVILES (420 aa)). Active-site for beta-ketoacyl synthase activity residues include cysteine 171, histidine 306, and histidine 344. The tract at residues 535-851 (VFTGQGAQYA…PYSPTLVRKE (317 aa)) is malonyl-CoA:ACP transacylase (MAT) domain. Catalysis depends on serine 629, which acts as the For malonyltransferase activity. Residues 920 to 1064 (HELLGTRATA…GSIRVMESTL (145 aa)) form an N-terminal hotdog fold region. The dehydratase (DH) domain stretch occupies residues 920 to 1232 (HELLGTRATA…HLRMNEYTGK (313 aa)). Positions 920-1235 (HELLGTRATA…MNEYTGKAPV (316 aa)) constitute a PKS/mFAS DH domain. Catalysis depends on histidine 952, which acts as the Proton acceptor; for dehydratase activity. Residues 1078–1235 (HEVWGMSRWY…MNEYTGKAPV (158 aa)) are C-terminal hotdog fold. The active-site Proton donor; for dehydratase activity is the aspartate 1144. An enoyl reductase (ER) domain region spans residues 1639–1956 (GMTDTIHFQQ…NKDRVGKVVV (318 aa)). Positions 1981 to 2159 (TYLLVGCLGG…AVSVGLGMIS (179 aa)) are ketoreductase (KR) domain. One can recognise a Carrier domain in the interval 2297–2375 (TMLDAILRLT…TLAEFIEEKL (79 aa)). Position 2334 is an O-(pantetheine 4'-phosphoryl)serine (serine 2334).

The protein operates within secondary metabolite biosynthesis. Highly reducing polyketide synthase; part of the gene cluster that mediates the biosynthesis of virensols and trichoxide, fungal natural products that contain or are derived from a salicylaldehyde core. The pathway begins with the synthesis of the reduced chain in virensol C by the highly reducing polyketide synthase virA via condensation of one acetate and 8 malonate units. VirA has interesting programming rules since the first 2 ketides are fully reduced, the 3 following ketides undergo beta-dehydration, and the last 3 ketides are only reduced to beta-hydroxys to yield the trihydroxy portion. The production of aldehyde virensol C by virA alone is surprising, since virA does not contain a reductase (R) domain that is typically associated with reductive product release in HRPKS. The cupin-domain enzyme virC is involved in enhancing virA product turnover. The short-chain dehydrogenase virB then oxidizes the C-7 alcohol of virensol C to a ketone, yielding virensol D. Virensol D is further transformed to salicylaldehyde 5-deoxyaurocitrin by the short-chain dehydrogenase virD. VirD catalyzes the dehydrogenation of C-3 to form the beta-ketone aldehyde, which is followed by the generation of the nucleophilic C-2 that is required for the intramolecular aldol condensation between C-2 and C-7, itself followed by dehydration and aromatization which leads to salicylaldehyde 5-deoxyaurocitrin. While the dehydrogenation of virensol D is definitely catalyzed by virD, the aldol condensation and dehydration may be uncatalyzed or assisted by virD. The short chain dehydrogenase virG then converts salicylaldehyde 5-deoxyaurocitrin into virensol B which is further hydroxylated by the cytochrome P450 monooxygenase virE to yield the hydroquinone virensol A. VirI then may oxidize virensol A to form the quinone, while virH performs the epoxidation. Finally, the two remaining short-chain dehydrogenases, virK and virL, are probably responsible for reducing the ketones to the corresponding alcohols to furnish the epoxycyclohexanol structure in trichoxide. The protein is Highly reducing polyketide synthase virA of Hypocrea virens (strain Gv29-8 / FGSC 10586) (Gliocladium virens).